The following is a 464-amino-acid chain: Synaptosomal-associated protein 47 (464 aa).

The disordered stretch occupies residues 20 to 42 (GRLWDSSGVPQRQKRPGPWRTQT). 2 t-SNARE coiled-coil homology domains span residues 154-216 (VADA…LTEL) and 401-463 (TSLP…MKRL).

It belongs to the SVAP1 family. As to quaternary structure, forms a complex containing SNAP47, VAMP2 and STX1A. Associates with the BLOC-1 complex. Interacts with BLOC1S6.

It is found in the endomembrane system. Its subcellular location is the cytoplasm. The protein resides in the perinuclear region. Plays a role in intracellular membrane fusion. The sequence is that of Synaptosomal-associated protein 47 (SNAP47) from Homo sapiens (Human).